Consider the following 201-residue polypeptide: Putative ankyrin repeat protein R868 (201 aa).

2 ANK repeats span residues 125-154 (YENN…NCYF) and 156-188 (KAKK…DYNF).

The protein is Putative ankyrin repeat protein R868 of Acanthamoeba polyphaga (Amoeba).